An 85-amino-acid chain; its full sequence is MTKREYNSQPEMLEGAKLIGAGAATIALAGAAIGIGNVFSSLIHSVARNPSLAKQLFGYAILGFALTEAIALFALMMAFLILFVF.

Helical transmembrane passes span 19–39 (IGAG…GNVF) and 61–81 (ILGF…AFLI).

Belongs to the ATPase C chain family. F-type ATPases have 2 components, CF(1) - the catalytic core - and CF(0) - the membrane proton channel. CF(1) has five subunits: alpha(3), beta(3), gamma(1), delta(1), epsilon(1). CF(0) has three main subunits: a, b and c.

The protein localises to the mitochondrion membrane. Its function is as follows. This protein is one of the chains of the nonenzymatic membrane component (F0) of mitochondrial ATPase. The polypeptide is ATP synthase subunit 9, mitochondrial (ATP9) (Arabidopsis thaliana (Mouse-ear cress)).